Consider the following 305-residue polypeptide: Translation initiation factor eIF2B subunit alpha (305 aa).

Lys35 carries the N6-acetyllysine modification.

The protein belongs to the eIF-2B alpha/beta/delta subunits family. As to quaternary structure, component of the translation initiation factor 2B (eIF2B) complex which is a heterodecamer of two sets of five different subunits: alpha, beta, gamma, delta and epsilon. Subunits alpha, beta and delta comprise a regulatory subcomplex and subunits epsilon and gamma comprise a catalytic subcomplex. Within the complex, the hexameric regulatory complex resides at the center, with the two heterodimeric catalytic subcomplexes bound on opposite sides.

The protein localises to the cytoplasm. It is found in the cytosol. Activated by the chemical integrated stress response (ISR) inhibitor ISRIB which stimulates guanine nucleotide exchange factor activity for both phosphorylated and unphosphorylated eIF2. Acts as a component of the translation initiation factor 2B (eIF2B) complex, which catalyzes the exchange of GDP for GTP on eukaryotic initiation factor 2 (eIF2) gamma subunit. Its guanine nucleotide exchange factor activity is repressed when bound to eIF2 complex phosphorylated on the alpha subunit, thereby limiting the amount of methionyl-initiator methionine tRNA available to the ribosome and consequently global translation is repressed. This chain is Translation initiation factor eIF2B subunit alpha (Eif2b1), found in Mus musculus (Mouse).